The sequence spans 376 residues: N-acetyldiaminopimelate deacetylase (376 aa).

Asp69 is an active-site residue. Glu128 serves as the catalytic Proton acceptor.

This sequence belongs to the peptidase M20A family. N-acetyldiaminopimelate deacetylase subfamily.

The catalysed reaction is N-acetyl-(2S,6S)-2,6-diaminopimelate + H2O = (2S,6S)-2,6-diaminopimelate + acetate. The protein operates within amino-acid biosynthesis; L-lysine biosynthesis via DAP pathway; LL-2,6-diaminopimelate from (S)-tetrahydrodipicolinate (acetylase route): step 3/3. Catalyzes the conversion of N-acetyl-diaminopimelate to diaminopimelate and acetate. This Bacillus cytotoxicus (strain DSM 22905 / CIP 110041 / 391-98 / NVH 391-98) protein is N-acetyldiaminopimelate deacetylase.